We begin with the raw amino-acid sequence, 262 residues long: Hydroxyethylthiazole kinase (262 aa).

Met-50 is a substrate binding site. The ATP site is built by Arg-125 and Thr-171. Gly-198 contributes to the substrate binding site.

The protein belongs to the Thz kinase family. The cofactor is Mg(2+).

The catalysed reaction is 5-(2-hydroxyethyl)-4-methylthiazole + ATP = 4-methyl-5-(2-phosphooxyethyl)-thiazole + ADP + H(+). It participates in cofactor biosynthesis; thiamine diphosphate biosynthesis; 4-methyl-5-(2-phosphoethyl)-thiazole from 5-(2-hydroxyethyl)-4-methylthiazole: step 1/1. Catalyzes the phosphorylation of the hydroxyl group of 4-methyl-5-beta-hydroxyethylthiazole (THZ). The sequence is that of Hydroxyethylthiazole kinase from Escherichia fergusonii (strain ATCC 35469 / DSM 13698 / CCUG 18766 / IAM 14443 / JCM 21226 / LMG 7866 / NBRC 102419 / NCTC 12128 / CDC 0568-73).